A 529-amino-acid chain; its full sequence is Bifunctional purine biosynthesis protein PurH (529 aa).

In terms of domain architecture, MGS-like spans Gln-2–Val-148.

The protein belongs to the PurH family.

The catalysed reaction is (6R)-10-formyltetrahydrofolate + 5-amino-1-(5-phospho-beta-D-ribosyl)imidazole-4-carboxamide = 5-formamido-1-(5-phospho-D-ribosyl)imidazole-4-carboxamide + (6S)-5,6,7,8-tetrahydrofolate. The enzyme catalyses IMP + H2O = 5-formamido-1-(5-phospho-D-ribosyl)imidazole-4-carboxamide. Its pathway is purine metabolism; IMP biosynthesis via de novo pathway; 5-formamido-1-(5-phospho-D-ribosyl)imidazole-4-carboxamide from 5-amino-1-(5-phospho-D-ribosyl)imidazole-4-carboxamide (10-formyl THF route): step 1/1. The protein operates within purine metabolism; IMP biosynthesis via de novo pathway; IMP from 5-formamido-1-(5-phospho-D-ribosyl)imidazole-4-carboxamide: step 1/1. The chain is Bifunctional purine biosynthesis protein PurH from Proteus mirabilis (strain HI4320).